Reading from the N-terminus, the 86-residue chain is Small ribosomal subunit protein uS15c (86 aa).

This sequence belongs to the universal ribosomal protein uS15 family. In terms of assembly, part of the 30S ribosomal subunit.

The protein resides in the plastid. The sequence is that of Small ribosomal subunit protein uS15c (rps15) from Cuscuta gronovii (Common dodder).